The chain runs to 266 residues: Translation initiation factor 2 subunit alpha (266 aa).

Positions 12–83 (GEILIATVKQ…RKGTVDVSLK (72 aa)) constitute an S1 motif domain.

The protein belongs to the eIF-2-alpha family. As to quaternary structure, heterotrimer composed of an alpha, a beta and a gamma chain.

EIF-2 functions in the early steps of protein synthesis by forming a ternary complex with GTP and initiator tRNA. This chain is Translation initiation factor 2 subunit alpha, found in Saccharolobus islandicus (strain L.S.2.15 / Lassen #1) (Sulfolobus islandicus).